A 60-amino-acid polypeptide reads, in one-letter code: Sperm protamine P1 (60 aa).

Residues 1–60 (MARYRHSRSRSRSRYQRRRRRRSRYRSQRRRYRRRRGSRRRRRRGRRRGYRRRYSRRRRY) form a disordered region.

Belongs to the protamine P1 family. Testis.

It localises to the nucleus. The protein resides in the chromosome. Functionally, protamines substitute for histones in the chromatin of sperm during the haploid phase of spermatogenesis. They compact sperm DNA into a highly condensed, stable and inactive complex. The protein is Sperm protamine P1 (PRM1) of Phascolarctos cinereus (Koala).